A 310-amino-acid polypeptide reads, in one-letter code: Methionyl-tRNA formyltransferase (310 aa).

A (6S)-5,6,7,8-tetrahydrofolate-binding site is contributed by 111-114 (SLLP).

The protein belongs to the Fmt family.

The enzyme catalyses L-methionyl-tRNA(fMet) + (6R)-10-formyltetrahydrofolate = N-formyl-L-methionyl-tRNA(fMet) + (6S)-5,6,7,8-tetrahydrofolate + H(+). Functionally, attaches a formyl group to the free amino group of methionyl-tRNA(fMet). The formyl group appears to play a dual role in the initiator identity of N-formylmethionyl-tRNA by promoting its recognition by IF2 and preventing the misappropriation of this tRNA by the elongation apparatus. The chain is Methionyl-tRNA formyltransferase from Nitrobacter hamburgensis (strain DSM 10229 / NCIMB 13809 / X14).